The following is a 214-amino-acid chain: RNA-free ribonuclease P (214 aa).

It belongs to the HARP family.

The catalysed reaction is Endonucleolytic cleavage of RNA, removing 5'-extranucleotides from tRNA precursor.. Functionally, RNA-free RNase P that catalyzes the removal of the 5'-leader sequence from pre-tRNA to produce the mature 5'-terminus. This chain is RNA-free ribonuclease P, found in Aeropyrum pernix (strain ATCC 700893 / DSM 11879 / JCM 9820 / NBRC 100138 / K1).